The sequence spans 106 residues: Molt-inhibiting hormone (106 aa).

Residues 1–29 (MVNQVAQCFTVRRVWLVVVVGLLVHQTTA) form the signal peptide. 3 disulfide bridges follow: cysteine 36-cysteine 73, cysteine 53-cysteine 69, and cysteine 56-cysteine 82. Residue alanine 104 is modified to Alanine amide. Residues 105–106 (GR) constitute a propeptide that is removed on maturation.

Sinus gland of the eyestalk.

Its subcellular location is the secreted. In terms of biological role, inhibits Y-organs where molting hormone (ecdysteroid) is secreted. A molting cycle is initiated when MIH secretion diminishes or stops. The sequence is that of Molt-inhibiting hormone from Faxonius limosus (Spinycheek crayfish).